The sequence spans 113 residues: Hydrogenase maturation factor HypA (113 aa).

His2 serves as a coordination point for Ni(2+). Zn(2+) is bound by residues Cys73, Cys76, Cys89, and Cys92.

Belongs to the HypA/HybF family.

In terms of biological role, involved in the maturation of [NiFe] hydrogenases. Required for nickel insertion into the metal center of the hydrogenase. This Chlorobaculum parvum (strain DSM 263 / NCIMB 8327) (Chlorobium vibrioforme subsp. thiosulfatophilum) protein is Hydrogenase maturation factor HypA.